Here is a 424-residue protein sequence, read N- to C-terminus: Bone morphogenetic protein 10 (424 aa).

The signal sequence occupies residues Met1–Gly21. Residues Ser22–Arg316 constitute a propeptide that is removed on maturation. N-linked (GlcNAc...) asparagine glycosylation is found at Asn67 and Asn131. 3 disulfides stabilise this stretch: Cys323–Cys389, Cys352–Cys421, and Cys356–Cys423.

The protein belongs to the TGF-beta family. In terms of assembly, homodimer; disulfide-linked. Interacts with FBN1 (via N-terminal domain) and FBN2. Interacts with ENG. As to expression, detected in mammary epithelia (at protein level).

The protein localises to the secreted. Required for maintaining the proliferative activity of embryonic cardiomyocytes by preventing premature activation of the negative cell cycle regulator CDKN1C/p57KIP and maintaining the required expression levels of cardiogenic factors such as MEF2C and NKX2-5. Acts as a ligand for ACVRL1/ALK1, BMPR1A/ALK3 and BMPR1B/ALK6, leading to activation of SMAD1, SMAD5 and SMAD8 transcription factors. Inhibits endothelial cell migration and growth. May reduce cell migration and cell matrix adhesion in breast cancer cell lines. This chain is Bone morphogenetic protein 10 (BMP10), found in Homo sapiens (Human).